We begin with the raw amino-acid sequence, 441 residues long: G-protein coupled receptor family C group 5 member C (441 aa).

Positions 1-23 (MAIHKALVMCLGLPLFLFPGAWA) are cleaved as a signal peptide. The Extracellular segment spans residues 24-50 (QGHVPPGCSQGLNPLYYNLCDRSGAWG). The chain crosses the membrane as a helical span at residues 51 to 71 (IVLEAVAGAGIVTTFVLTIIL). Residues 72–85 (VASLPFVQDTKKRS) lie on the Cytoplasmic side of the membrane. Residues 86-106 (LLGTQVFFLLGTLGLFCLVFA) form a helical membrane-spanning segment. Topologically, residues 107 to 120 (CVVKPDFSTCASRR) are extracellular. The helical transmembrane segment at 121–141 (FLFGVLFAICFSCLAAHVFAL) threads the bilayer. Over 142–155 (NFLARKNHGPRGWV) the chain is Cytoplasmic. A helical membrane pass occupies residues 156-176 (IFTVALLLTLVEVIINTEWLI). The Extracellular segment spans residues 177-208 (ITLVRGSGEGGPQGNSSAGWAVASPCAIANMD). Asn-191 carries an N-linked (GlcNAc...) asparagine glycan. The chain crosses the membrane as a helical span at residues 209-229 (FVMALIYVMLLLLGAFLGAWP). Residues 230-241 (ALCGRYKRWRKH) lie on the Cytoplasmic side of the membrane. Residues 242 to 262 (GVFVLLTTATSVAIWVVWIVM) traverse the membrane as a helical segment. Residues 263–279 (YTYGNKQHNSPTWDDPT) are Extracellular-facing. A helical membrane pass occupies residues 280 to 300 (LAIALAANAWAFVLFYVIPEV). At 301–441 (SQVTKSSPEQ…QVFRNPYVWD (141 aa)) the chain is on the cytoplasmic side. 4 positions are modified to phosphoserine: Ser-344, Ser-383, Ser-403, and Ser-406. The disordered stretch occupies residues 412-441 (DMYSAQSHQAATPPKDGKNSQVFRNPYVWD). Tyr-414 is subject to Phosphotyrosine. Thr-423 carries the post-translational modification Phosphothreonine.

It belongs to the G-protein coupled receptor 3 family. As to expression, expression is highest in the periphery, particularly in the stomach, but also in the kidney, liver, pancreas, and prostate. In brain, levels of expression are generally lower than in the periphery, with the exception of cerebellum, spinal cord, and dorsal root ganglia (DRG).

The protein resides in the cell membrane. The protein localises to the cytoplasmic vesicle membrane. This retinoic acid-inducible G-protein coupled receptor provide evidence for a possible interaction between retinoid and G-protein signaling pathways. The sequence is that of G-protein coupled receptor family C group 5 member C (GPRC5C) from Homo sapiens (Human).